We begin with the raw amino-acid sequence, 391 residues long: DNA-directed RNA polymerase subunit Rpo1C (391 aa).

Belongs to the RNA polymerase beta' chain family. In terms of assembly, part of the RNA polymerase complex.

It localises to the cytoplasm. The catalysed reaction is RNA(n) + a ribonucleoside 5'-triphosphate = RNA(n+1) + diphosphate. Its function is as follows. DNA-dependent RNA polymerase (RNAP) catalyzes the transcription of DNA into RNA using the four ribonucleoside triphosphates as substrates. Forms part of the jaw domain. This is DNA-directed RNA polymerase subunit Rpo1C from Thermococcus onnurineus (strain NA1).